The sequence spans 1085 residues: Voltage-dependent calcium channel subunit alpha-2/delta-3 (1085 aa).

The N-terminal stretch at 1–33 is a signal peptide; the sequence is MAGPGSLCCASRGASALLATALLYAALGDVVRS. Over 34–1062 the chain is Extracellular; it reads EQQIPLSVVK…HPEENARECG (1029 aa). Asn166 is a glycosylation site (N-linked (GlcNAc...) asparagine). Residues 256-438 form the VWFA domain; that stretch reads DVVILVDVSG…ENVMEYLHVL (183 aa). Asp262, Ser264, and Ser266 together coordinate a divalent metal cation. Residues 262 to 266 carry the MIDAS-like motif motif; that stretch reads DVSGS. Asn309 is a glycosylation site (N-linked (GlcNAc...) asparagine). Cysteines 412 and 1049 form a disulfide. The Cache domain maps to 452–543; sequence WTEAYIDSTL…RPLYEEGKKR (92 aa). N-linked (GlcNAc...) asparagine glycosylation is found at Asn547 and Asn626. Tyr918 carries the post-translational modification Phosphotyrosine. Residues 1063-1083 traverse the membrane as a helical segment; that stretch reads GASSLQAQVALLLLPLVSSLF. Residues 1084–1085 lie on the Cytoplasmic side of the membrane; that stretch reads SR.

This sequence belongs to the calcium channel subunit alpha-2/delta family. In terms of assembly, dimer formed of alpha-2-2 and delta-2 chains; disulfide-linked. Voltage-dependent calcium channels are multisubunit complexes, consisting of alpha-1 (CACNA1), alpha-2 (CACNA2D), beta (CACNB) and delta (CACNA2D) subunits in a 1:1:1:1 ratio. In terms of processing, N-glycosylated. May be proteolytically processed into subunits alpha-2-3 and delta-3 that are disulfide-linked. It is however unclear whether such cleavage really takes place in vivo and has a functional role. In terms of tissue distribution, in heart, it is expressed in atrium but not in ventricle.

The protein resides in the membrane. Functionally, the alpha-2/delta subunit of voltage-dependent calcium channels regulates calcium current density and activation/inactivation kinetics of the calcium channel. Acts as a regulatory subunit for P/Q-type calcium channel (CACNA1A), N-type (CACNA1B), L-type (CACNA1C OR CACNA1D) but not T-type (CACNA1G). In Rattus norvegicus (Rat), this protein is Voltage-dependent calcium channel subunit alpha-2/delta-3 (Cacna2d3).